The sequence spans 495 residues: Potassium voltage-gated channel subfamily A member 1 (495 aa).

Positions 1–30 (MTVMSGENADEASTAPGHPQDGSYPRQADH) are disordered. Residues 1 to 128 (MTVMSGENAD…FYELGEEAME (128 aa)) are tetramerization domain. The Cytoplasmic portion of the chain corresponds to 1-164 (MTVMSGENAD…LLFEYPESSG (164 aa)). Ser23 carries the post-translational modification Phosphoserine. The chain crosses the membrane as a helical span at residues 165-186 (PARVIAIVSVMVILISIVIFCL). Residues 187–220 (ETLPELKDDKDFTGTIHRIDNTTVIYTSNIFTDP) lie on the Extracellular side of the membrane. Asn207 carries an N-linked (GlcNAc...) asparagine glycan. Residues 221–242 (FFIVETLCIIWFSFELVVRFFA) traverse the membrane as a helical segment. A lipid anchor (S-palmitoyl cysteine) is attached at Cys243. Over 243-253 (CPSKTDFFKNI) the chain is Cytoplasmic. A helical transmembrane segment spans residues 254-274 (MNFIDIVAIIPYFITLGTEIA). Residues 275 to 287 (EQEGNQKGEQATS) are Extracellular-facing. A helical; Voltage-sensor transmembrane segment spans residues 288 to 308 (LAILRVIRLVRVFRIFKLSRH). Topologically, residues 309-323 (SKGLQILGQTLKASM) are cytoplasmic. Positions 310 to 323 (KGLQILGQTLKASM) are S4-S5 linker. Ser322 is subject to Phosphoserine; by PKA. The helical transmembrane segment at 324–345 (RELGLLIFFLFIGVILFSSAVY) threads the bilayer. At 346 to 359 (FAEAEEAESHFSSI) the chain is on the extracellular side. Residues 360-371 (PDAFWWAVVSMT) constitute an intramembrane region (helical). The Selectivity filter signature appears at 372–377 (TVGYGD). The stretch at 372–379 (TVGYGDMY) is an intramembrane region. Topologically, residues 380-386 (PVTIGGK) are extracellular. The helical transmembrane segment at 387–415 (IVGSLCAIAGVLTIALPVPVIVSNFNYFY) threads the bilayer. The Cytoplasmic segment spans residues 416–495 (HRETEGEEQA…VNKSKLLTDV (80 aa)). Phosphoserine occurs at positions 437 and 439. Ser446 is modified (phosphoserine; by PKA). Residues 493 to 495 (TDV) carry the PDZ-binding motif.

Belongs to the potassium channel family. A (Shaker) (TC 1.A.1.2) subfamily. Kv1.1/KCNA1 sub-subfamily. As to quaternary structure, homotetramer and heterotetramer with other channel-forming alpha subunits, such as KCNA2, KCNA4, KCNA5, KCNA6 and KCNA7. Channel activity is regulated by interaction with the beta subunits KCNAB1 and KCNAB2. Identified in a complex with KCNA2 and KCNAB2. Interacts (via C-terminus) with the PDZ domains of DLG1, DLG2 and DLG4. Interacts with LGI1 within a complex containing LGI1, KCNA4 and KCNAB1. Interacts (via N-terminus) with STX1A; this promotes channel inactivation. Interacts (via N-terminus) with the heterodimer formed by GNB1 and GNG2; this promotes channel inactivation. Can interact simultaneously with STX1A and the heterodimer formed by GNB1 and GNG2. Interacts (via cytoplasmic N-terminal domain) with KCNRG; this inhibits channel activity. Interacts with ANK3; this inhibits channel activity. Interacts with ADAM11. N-glycosylated. In terms of processing, palmitoylated on Cys-243; which may be required for membrane targeting. Post-translationally, phosphorylated on tyrosine residues. Phosphorylation increases in response to NRG1; this inhibits channel activity. Phosphorylation at Ser-446 regulates channel activity by down-regulating expression at the cell membrane. Detected in brain. Expressed in cerebellar cortex basket cell terminals, the area surround the Purkinje cell soma, and the pinceaux expansions encircling the axon initial segment (at protein level). Detected in the juxtaparanodal regions of the nodes of Ranvier in myelinated axons. Detected in the paranodal region in sciatic nerve. Detected on cell bodies in cerebellum, dorsal and ventral cochlear nucleus, pontine reticular nucleus, mesencephalic trigeminal nucleus, motor trigeminal nucleus and the pricipal sensory trigeminal nucleus. Detected in terminal fields of basket cells in the cerebellum corpus medullare. Detected in hippocampus CA3 pyramidal neurons and in the hilus and stratum moleculare of the dentate gyrus. Detected in the central nucleus and the external nucleus of the inferior colliculus. Detected in fiber tracts in the optic tract, external medullary lamina, stria terminalis, medulla, ventral pallidum and substantia nigra. Detected in neurons from dorsal root ganglion. Detected in neurons in the medial nucleus of the trapezoid body. Detected in midbrain dopamine neuron axon terminals. Detected in brain cortex. Detected in brainstem. Detected in juxtaparanodal regions of the nodes of Ranvier in the vagus nerve, but only at very low levels in the heart. Detected in the islet of Langerhans. Detected at the luminal membrane in distal convoluted tubules in the kidney (at protein level). Detected in hippocampus, thalamus, neocortex and ventral brain cortex, including the piriform and entorhinal cortex and the amygdala. Detected in midbrain dopamine neurons. Detected in heart atrium, ventricle, sinoatrial node and atrioventricular node.

The protein localises to the cell membrane. It localises to the cell projection. The protein resides in the axon. Its subcellular location is the membrane. It is found in the perikaryon. The protein localises to the dendrite. It localises to the cell junction. The protein resides in the synapse. Its subcellular location is the cytoplasmic vesicle. It is found in the endoplasmic reticulum. The protein localises to the presynaptic cell membrane. It localises to the presynapse. It carries out the reaction K(+)(in) = K(+)(out). Inhibited by 4-aminopyridine (4-AP), tetraethylammonium (TEA) and dendrotoxin (DTX), but not by charybdotoxin (CTX). In terms of biological role, voltage-gated potassium channel that mediates transmembrane potassium transport in excitable membranes, primarily in the brain and the central nervous system, but also in the kidney. Contributes to the regulation of the membrane potential and nerve signaling, and prevents neuronal hyperexcitability. Forms tetrameric potassium-selective channels through which potassium ions pass in accordance with their electrochemical gradient. The channel alternates between opened and closed conformations in response to the voltage difference across the membrane. Can form functional homotetrameric channels and heterotetrameric channels that contain variable proportions of KCNA1, KCNA2, KCNA4, KCNA5, KCNA6, KCNA7, and possibly other family members as well; channel properties depend on the type of alpha subunits that are part of the channel. Channel properties are modulated by cytoplasmic beta subunits that regulate the subcellular location of the alpha subunits and promote rapid inactivation of delayed rectifier potassium channels. In vivo, membranes probably contain a mixture of heteromeric potassium channel complexes, making it difficult to assign currents observed in intact tissues to any particular potassium channel family member. Homotetrameric KCNA1 forms a delayed-rectifier potassium channel that opens in response to membrane depolarization, followed by slow spontaneous channel closure. In contrast, a heterotetrameric channel formed by KCNA1 and KCNA4 shows rapid inactivation. Regulates neuronal excitability in hippocampus, especially in mossy fibers and medial perforant path axons, preventing neuronal hyperexcitability. May function as down-stream effector for G protein-coupled receptors and inhibit GABAergic inputs to basolateral amygdala neurons. May contribute to the regulation of neurotransmitter release, such as gamma-aminobutyric acid (GABA) release. Plays a role in regulating the generation of action potentials and preventing hyperexcitability in myelinated axons of the vagus nerve, and thereby contributes to the regulation of heart contraction. Required for normal neuromuscular responses. Regulates the frequency of neuronal action potential firing in response to mechanical stimuli, and plays a role in the perception of pain caused by mechanical stimuli, but does not play a role in the perception of pain due to heat stimuli. Required for normal responses to auditory stimuli and precise location of sound sources, but not for sound perception. The use of toxins that block specific channels suggest that it contributes to the regulation of the axonal release of the neurotransmitter dopamine. Required for normal postnatal brain development and normal proliferation of neuronal precursor cells in the brain. Plays a role in the reabsorption of Mg(2+) in the distal convoluted tubules in the kidney and in magnesium ion homeostasis, probably via its effect on the membrane potential. The chain is Potassium voltage-gated channel subfamily A member 1 from Mus musculus (Mouse).